We begin with the raw amino-acid sequence, 586 residues long: CTP synthase 2 (586 aa).

Residues 300 to 554 (SIALVGKYTK…LAATGTLNTH (255 aa)) enclose the Glutamine amidotransferase type-1 domain. Active-site for GATase activity residues include cysteine 399, histidine 526, and glutamate 528. 3 positions are modified to phosphoserine: serine 568, serine 571, and serine 574.

The protein belongs to the CTP synthase family.

It catalyses the reaction UTP + L-glutamine + ATP + H2O = CTP + L-glutamate + ADP + phosphate + 2 H(+). It participates in pyrimidine metabolism; CTP biosynthesis via de novo pathway; CTP from UDP: step 2/2. Its function is as follows. Catalyzes the ATP-dependent amination of UTP to CTP with either L-glutamine or ammonia as the source of nitrogen. Constitutes the rate-limiting enzyme in the synthesis of cytosine nucleotides. This is CTP synthase 2 (Ctps2) from Rattus norvegicus (Rat).